The sequence spans 377 residues: Queuine tRNA-ribosyltransferase (377 aa).

The active-site Proton acceptor is aspartate 93. Residues 93-97, aspartate 147, glutamine 191, and glycine 218 each bind substrate; that span reads DSGGF. The RNA binding stretch occupies residues 249 to 255; it reads GVGTPLD. The active-site Nucleophile is the aspartate 268. The segment at 273–277 is RNA binding; important for wobble base 34 recognition; the sequence is TRNAR. Residues cysteine 306, cysteine 308, cysteine 311, and histidine 337 each coordinate Zn(2+).

Belongs to the queuine tRNA-ribosyltransferase family. As to quaternary structure, homodimer. Within each dimer, one monomer is responsible for RNA recognition and catalysis, while the other monomer binds to the replacement base PreQ1. Zn(2+) serves as cofactor.

It carries out the reaction 7-aminomethyl-7-carbaguanine + guanosine(34) in tRNA = 7-aminomethyl-7-carbaguanosine(34) in tRNA + guanine. It participates in tRNA modification; tRNA-queuosine biosynthesis. Functionally, catalyzes the base-exchange of a guanine (G) residue with the queuine precursor 7-aminomethyl-7-deazaguanine (PreQ1) at position 34 (anticodon wobble position) in tRNAs with GU(N) anticodons (tRNA-Asp, -Asn, -His and -Tyr). Catalysis occurs through a double-displacement mechanism. The nucleophile active site attacks the C1' of nucleotide 34 to detach the guanine base from the RNA, forming a covalent enzyme-RNA intermediate. The proton acceptor active site deprotonates the incoming PreQ1, allowing a nucleophilic attack on the C1' of the ribose to form the product. After dissociation, two additional enzymatic reactions on the tRNA convert PreQ1 to queuine (Q), resulting in the hypermodified nucleoside queuosine (7-(((4,5-cis-dihydroxy-2-cyclopenten-1-yl)amino)methyl)-7-deazaguanosine). The protein is Queuine tRNA-ribosyltransferase of Oleidesulfovibrio alaskensis (strain ATCC BAA-1058 / DSM 17464 / G20) (Desulfovibrio alaskensis).